The following is a 287-amino-acid chain: GTPase Era (287 aa).

One can recognise an Era-type G domain in the interval R11–E174. Residues G19–S26 and D66–I70 each bind GTP. The KH type-2 domain maps to L205–R273.

Belongs to the TRAFAC class TrmE-Era-EngA-EngB-Septin-like GTPase superfamily. Era GTPase family. Monomer.

Its subcellular location is the cytoplasm. It is found in the cell membrane. In terms of biological role, an essential GTPase that binds both GDP and GTP, with rapid nucleotide exchange. Plays a role in 16S rRNA processing and 30S ribosomal subunit biogenesis and possibly also in cell cycle regulation and energy metabolism. This Acidimicrobium ferrooxidans (strain DSM 10331 / JCM 15462 / NBRC 103882 / ICP) protein is GTPase Era.